We begin with the raw amino-acid sequence, 722 residues long: Glycine--tRNA ligase beta subunit (722 aa).

It belongs to the class-II aminoacyl-tRNA synthetase family. In terms of assembly, tetramer of two alpha and two beta subunits.

The protein resides in the cytoplasm. The catalysed reaction is tRNA(Gly) + glycine + ATP = glycyl-tRNA(Gly) + AMP + diphosphate. The protein is Glycine--tRNA ligase beta subunit of Haemophilus influenzae (strain 86-028NP).